The chain runs to 196 residues: Orotate phosphoribosyltransferase (196 aa).

117–125 (EDVVTTGLS) is a 5-phospho-alpha-D-ribose 1-diphosphate binding site. Residues Thr121 and Arg149 each coordinate orotate.

This sequence belongs to the purine/pyrimidine phosphoribosyltransferase family. PyrE subfamily. In terms of assembly, homodimer. It depends on Mg(2+) as a cofactor.

The catalysed reaction is orotidine 5'-phosphate + diphosphate = orotate + 5-phospho-alpha-D-ribose 1-diphosphate. Its pathway is pyrimidine metabolism; UMP biosynthesis via de novo pathway; UMP from orotate: step 1/2. Functionally, catalyzes the transfer of a ribosyl phosphate group from 5-phosphoribose 1-diphosphate to orotate, leading to the formation of orotidine monophosphate (OMP). This chain is Orotate phosphoribosyltransferase, found in Rhizorhabdus wittichii (strain DSM 6014 / CCUG 31198 / JCM 15750 / NBRC 105917 / EY 4224 / RW1) (Sphingomonas wittichii).